A 555-amino-acid polypeptide reads, in one-letter code: Probable ferredoxin/ferredoxin--NADP reductase (555 aa).

2 4Fe-4S ferredoxin-type domains span residues 2 to 29 (PYIITQSCCNDGSCVFACPVNCIHPTPD) and 37 to 66 (EMLYIDPVACVDCGACVSACPVGAIASDTR). [4Fe-4S] cluster contacts are provided by cysteine 9, cysteine 15, cysteine 19, cysteine 46, cysteine 49, cysteine 52, and cysteine 56. Residues 115–555 (VAIVGSGPAA…APPLRLRALS (441 aa)) are ferredoxin--NADP reductase. Residues alanine 123, glutamate 143, leucine 151, and isoleucine 187 each contribute to the FAD site. Residues arginine 213, 258-261 (NGNV), 302-303 (RR), and glutamate 314 each bind NADP(+). FAD contacts are provided by residues tryptophan 453 and 460–462 (GFI). Residue glycine 460 coordinates NADP(+).

In the C-terminal section; belongs to the ferredoxin--NADP reductase family. Requires [4Fe-4S] cluster as cofactor. FAD is required as a cofactor.

It catalyses the reaction 2 reduced [2Fe-2S]-[ferredoxin] + NADP(+) + H(+) = 2 oxidized [2Fe-2S]-[ferredoxin] + NADPH. This Mycobacterium leprae (strain TN) protein is Probable ferredoxin/ferredoxin--NADP reductase (fprB).